The following is a 296-amino-acid chain: Immediate early response gene 5-like protein (296 aa).

It belongs to the IER family.

The sequence is that of Immediate early response gene 5-like protein (ier5l) from Xenopus tropicalis (Western clawed frog).